A 100-amino-acid polypeptide reads, in one-letter code: Large ribosomal subunit protein eL31 (100 aa).

It belongs to the eukaryotic ribosomal protein eL31 family.

In Hyperthermus butylicus (strain DSM 5456 / JCM 9403 / PLM1-5), this protein is Large ribosomal subunit protein eL31.